We begin with the raw amino-acid sequence, 312 residues long: Methionyl-tRNA formyltransferase (312 aa).

Residue 109–112 participates in (6S)-5,6,7,8-tetrahydrofolate binding; it reads SLLP.

The protein belongs to the Fmt family.

It carries out the reaction L-methionyl-tRNA(fMet) + (6R)-10-formyltetrahydrofolate = N-formyl-L-methionyl-tRNA(fMet) + (6S)-5,6,7,8-tetrahydrofolate + H(+). Its function is as follows. Attaches a formyl group to the free amino group of methionyl-tRNA(fMet). The formyl group appears to play a dual role in the initiator identity of N-formylmethionyl-tRNA by promoting its recognition by IF2 and preventing the misappropriation of this tRNA by the elongation apparatus. The chain is Methionyl-tRNA formyltransferase from Ruminiclostridium cellulolyticum (strain ATCC 35319 / DSM 5812 / JCM 6584 / H10) (Clostridium cellulolyticum).